The sequence spans 972 residues: Fibroblast growth factor receptor (972 aa).

Residues 1 to 43 form the signal peptide; the sequence is MSLPRCPRTRTVMFSRTLTRCYPQRTLWIAILCVICSWTLSTA. At 44-547 the chain is on the extracellular side; sequence GATTIRDKEV…NNMQPTSKTQ (504 aa). Residues 57 to 152 form the Fibronectin type-III domain; it reads APQDLTAIPV…YIEASGTPPI (96 aa). 12 N-linked (GlcNAc...) asparagine glycosylation sites follow: Asn109, Asn121, Asn191, Asn203, Asn239, Asn272, Asn315, Asn390, Asn398, Asn419, Asn422, and Asn460. The 93-residue stretch at 150–242 folds into the Ig-like C2-type 1 domain; it reads PPIPPTLRRN…GQPIHVNFTL (93 aa). Residues Cys176 and Cys226 are joined by a disulfide bond. 2 Ig-like C2-type domains span residues 282–374 and 383–517; these read PRFT…YDVK and PIMS…AYLD. Cys306 and Cys358 form a disulfide bridge. The cysteines at positions 403 and 501 are disulfide-linked. Residues 548–568 form a helical membrane-spanning segment; sequence LIIFSVVGFVVVLILVTCIAI. The Cytoplasmic portion of the chain corresponds to 569–972; sequence LCKQTQVRHR…QTRDCCPYAN (404 aa). The region spanning 639-925 is the Protein kinase domain; sequence LTVGKTIGEG…ISVSSNQDYL (287 aa). ATP contacts are provided by residues 645–653 and Lys673; that span reads IGEGAFGKV. Asp781 acts as the Proton acceptor in catalysis. Residue Tyr812 is modified to Phosphotyrosine; by autocatalysis.

Belongs to the protein kinase superfamily. Tyr protein kinase family. Fibroblast growth factor receptor subfamily.

The protein resides in the membrane. It carries out the reaction L-tyrosyl-[protein] + ATP = O-phospho-L-tyrosyl-[protein] + ADP + H(+). Functionally, receptor for basic fibroblast growth factor. The chain is Fibroblast growth factor receptor (FGFR) from Strongylocentrotus purpuratus (Purple sea urchin).